The primary structure comprises 331 residues: 5-formaminoimidazole-4-carboxamide-1-(beta)-D-ribofuranosyl 5'-monophosphate synthetase (331 aa).

The 5-amino-1-(5-phospho-beta-D-ribosyl)imidazole-4-carboxamide site is built by His-9 and Ser-69. The ATP-grasp domain maps to 76–322; sequence VELVEKMKVP…IAMELKQGLE (247 aa). ATP is bound by residues 120–179 and Glu-201; that span reads PDDI…VPVY. Asn-229 serves as a coordination point for 5-amino-1-(5-phospho-beta-D-ribosyl)imidazole-4-carboxamide. Mg(2+) is bound by residues Glu-267 and Glu-280.

The protein belongs to the phosphohexose mutase family. Mg(2+) serves as cofactor. It depends on Mn(2+) as a cofactor.

It carries out the reaction 5-amino-1-(5-phospho-beta-D-ribosyl)imidazole-4-carboxamide + formate + ATP = 5-formamido-1-(5-phospho-D-ribosyl)imidazole-4-carboxamide + ADP + phosphate. It participates in purine metabolism; IMP biosynthesis via de novo pathway; 5-formamido-1-(5-phospho-D-ribosyl)imidazole-4-carboxamide from 5-amino-1-(5-phospho-D-ribosyl)imidazole-4-carboxamide (formate route): step 1/1. Catalyzes the ATP- and formate-dependent formylation of 5-aminoimidazole-4-carboxamide-1-beta-d-ribofuranosyl 5'-monophosphate (AICAR) to 5-formaminoimidazole-4-carboxamide-1-beta-d-ribofuranosyl 5'-monophosphate (FAICAR) in the absence of folates. This is 5-formaminoimidazole-4-carboxamide-1-(beta)-D-ribofuranosyl 5'-monophosphate synthetase from Thermococcus kodakarensis (strain ATCC BAA-918 / JCM 12380 / KOD1) (Pyrococcus kodakaraensis (strain KOD1)).